A 45-amino-acid chain; its full sequence is Large ribosomal subunit protein bL34 (45 aa).

It belongs to the bacterial ribosomal protein bL34 family.

The protein is Large ribosomal subunit protein bL34 of Salinispora tropica (strain ATCC BAA-916 / DSM 44818 / JCM 13857 / NBRC 105044 / CNB-440).